The chain runs to 205 residues: Octanoyltransferase (205 aa).

One can recognise a BPL/LPL catalytic domain in the interval 30 to 205 (NLSDELVWLL…ILKQEFHKIF (176 aa)). Substrate-binding positions include 68-75 (RGGKYTYH), 140-142 (AFG), and 153-155 (GIA). The active-site Acyl-thioester intermediate is Cys171.

It belongs to the LipB family.

It is found in the cytoplasm. The enzyme catalyses octanoyl-[ACP] + L-lysyl-[protein] = N(6)-octanoyl-L-lysyl-[protein] + holo-[ACP] + H(+). The protein operates within protein modification; protein lipoylation via endogenous pathway; protein N(6)-(lipoyl)lysine from octanoyl-[acyl-carrier-protein]: step 1/2. Functionally, catalyzes the transfer of endogenously produced octanoic acid from octanoyl-acyl-carrier-protein onto the lipoyl domains of lipoate-dependent enzymes. Lipoyl-ACP can also act as a substrate although octanoyl-ACP is likely to be the physiological substrate. In Wolbachia pipientis subsp. Culex pipiens (strain wPip), this protein is Octanoyltransferase.